Reading from the N-terminus, the 353-residue chain is Outer membrane protein P2 (353 aa).

Residues 1-20 (MKKTLAALIVGAFAASAANA) form the signal peptide.

This sequence belongs to the Gram-negative porin family. As to quaternary structure, homotrimer.

Its subcellular location is the cell outer membrane. Functionally, forms pores that allow passive diffusion of small molecules across the outer membrane. This is Outer membrane protein P2 (ompP2) from Haemophilus influenzae.